Reading from the N-terminus, the 148-residue chain is Transcription antitermination protein NusB (148 aa).

This sequence belongs to the NusB family.

In terms of biological role, involved in transcription antitermination. Required for transcription of ribosomal RNA (rRNA) genes. Binds specifically to the boxA antiterminator sequence of the ribosomal RNA (rrn) operons. The chain is Transcription antitermination protein NusB from Aquifex aeolicus (strain VF5).